The primary structure comprises 502 residues: Alpha-globin transcription factor CP2 (502 aa).

Residues 63 to 300 (EILPFQYVLC…SPGFNSSHSS (238 aa)) enclose the Grh/CP2 DB domain. Positions 133-386 (EHQQLEGWRW…LFNALKGRMV (254 aa)) are DNA-binding. Residues 241 to 265 (KGADRKQKIDREKMEKRTPHEKEKY) show a composition bias toward basic and acidic residues. Disordered regions lie at residues 241-268 (KGADRKQKIDREKMEKRTPHEKEKYQPS) and 294-326 (FNSSHSSFSLGEGNGSPNHQPEPPPPVTDNLLP). Serine 353 carries the phosphoserine modification.

Belongs to the grh/CP2 family. CP2 subfamily. Binds to DNA as a dimer. Interacts with UBP1 and PIAS1, and is probably part of a complex containing TFCP2, UBP1 and PIAS1. Component of the SSP (stage selector protein) complex, which appears to be a heteromer of TFCP2 and 2 copies of NFE4.

The protein resides in the nucleus. In terms of biological role, binds a variety of cellular promoters including fibrinogen, alpha-globin promoters. Activation of the alpha-globin promoter in erythroid cells is via synergistic interaction with UBP1. Functions as part of the SSP (stage selector protein) complex. Facilitates the interaction of the gamma-globin genes with enhancer elements contained in the locus control region in fetal erythroid cells. Interacts by binding to the stage selector element (SSE) in the proximal gamma-globin promoter. In Mus musculus (Mouse), this protein is Alpha-globin transcription factor CP2 (Tfcp2).